The chain runs to 441 residues: MTQMTPREIVHALDQYIIGQQEAKRSVAIALRNRWRRMQLDDSLRGEVVPKNILMIGPTGVGKTEIARRLAKLAGAPFIKVEATKFTEVGYVGRDVESIIRDLVEMAMKMVREQAKEEVAHKAEDATEERILDALLPRPRGSEYDHARDESSTRQTFRKKLREGQLDDKEIDIEITPQGGGFDISAPPGMEEMTSQLQSMFSNMGKQKSETRRVTVEEARRLLHDEEAAKLVNEEQIKHRAIEAVEQNGIVFLDEIDKVAKRGDSGSGGDVSREGVQRDLLPLIEGSTVSTKHGMVKTDHILFIASGAFHLSKPSDLIPELQGRLPIRVELQALTPDDFKRILTEPSAALTKQYQALLATDGLEVNFTDEGIARIAEIAWQVNDGTENIGARRLHTVMERLLEEPSFQGGDMASPLTIDAAYVDEQLGELATDEDLSRYIL.

ATP-binding positions include Ile18 and Gly60–Glu65. The segment at Ile131 to Arg158 is disordered. Positions Arg140 to Ser152 are enriched in basic and acidic residues. ATP-binding residues include Asp254, Glu320, and Arg392.

This sequence belongs to the ClpX chaperone family. HslU subfamily. A double ring-shaped homohexamer of HslV is capped on each side by a ring-shaped HslU homohexamer. The assembly of the HslU/HslV complex is dependent on binding of ATP.

It is found in the cytoplasm. Functionally, ATPase subunit of a proteasome-like degradation complex; this subunit has chaperone activity. The binding of ATP and its subsequent hydrolysis by HslU are essential for unfolding of protein substrates subsequently hydrolyzed by HslV. HslU recognizes the N-terminal part of its protein substrates and unfolds these before they are guided to HslV for hydrolysis. In Chromohalobacter salexigens (strain ATCC BAA-138 / DSM 3043 / CIP 106854 / NCIMB 13768 / 1H11), this protein is ATP-dependent protease ATPase subunit HslU.